A 580-amino-acid polypeptide reads, in one-letter code: NADH-ubiquinone oxidoreductase chain 5 (580 aa).

A run of 16 helical transmembrane segments spans residues 12–32 (FYFL…FLLM), 50–70 (IVMT…VLLI), 92–112 (ILLV…PNLI), 113–133 (SILL…IYFQ), 153–173 (VALL…YIFY), 183–203 (MMII…QIPF), 215–235 (TPVS…YLLI), 244–264 (WWMA…AGLG), 274–293 (IIAL…LSMG), 298–320 (AFFH…GSII), 343–363 (CSCF…AGFY), 367–387 (LILE…LFFF), 427–447 (ICFL…LMFL), 463–483 (LFVC…KLFF), 496–516 (FVGS…NYPL), and 560–580 (IYLL…VLVN).

Belongs to the complex I subunit 5 family.

The protein resides in the mitochondrion inner membrane. The catalysed reaction is a ubiquinone + NADH + 5 H(+)(in) = a ubiquinol + NAD(+) + 4 H(+)(out). Functionally, core subunit of the mitochondrial membrane respiratory chain NADH dehydrogenase (Complex I) that is believed to belong to the minimal assembly required for catalysis. Complex I functions in the transfer of electrons from NADH to the respiratory chain. The immediate electron acceptor for the enzyme is believed to be ubiquinone. The protein is NADH-ubiquinone oxidoreductase chain 5 (mt:ND5) of Anopheles gambiae (African malaria mosquito).